Reading from the N-terminus, the 309-residue chain is Thermolabile glutaminase (309 aa).

Substrate-binding residues include serine 64, asparagine 114, glutamate 160, asparagine 167, tyrosine 191, tyrosine 243, and valine 261.

This sequence belongs to the glutaminase family. As to quaternary structure, homotetramer.

The catalysed reaction is L-glutamine + H2O = L-glutamate + NH4(+). This Rhizobium etli (strain ATCC 51251 / DSM 11541 / JCM 21823 / NBRC 15573 / CFN 42) protein is Thermolabile glutaminase (glsA).